The chain runs to 147 residues: D-aminoacyl-tRNA deacylase (147 aa).

A Gly-cisPro motif, important for rejection of L-amino acids motif is present at residues Gly137–Pro138.

The protein belongs to the DTD family. Homodimer.

The protein resides in the cytoplasm. The enzyme catalyses glycyl-tRNA(Ala) + H2O = tRNA(Ala) + glycine + H(+). It catalyses the reaction a D-aminoacyl-tRNA + H2O = a tRNA + a D-alpha-amino acid + H(+). An aminoacyl-tRNA editing enzyme that deacylates mischarged D-aminoacyl-tRNAs. Also deacylates mischarged glycyl-tRNA(Ala), protecting cells against glycine mischarging by AlaRS. Acts via tRNA-based rather than protein-based catalysis; rejects L-amino acids rather than detecting D-amino acids in the active site. By recycling D-aminoacyl-tRNA to D-amino acids and free tRNA molecules, this enzyme counteracts the toxicity associated with the formation of D-aminoacyl-tRNA entities in vivo and helps enforce protein L-homochirality. In Acinetobacter baumannii (strain ACICU), this protein is D-aminoacyl-tRNA deacylase.